A 522-amino-acid polypeptide reads, in one-letter code: Maturase K (522 aa).

This sequence belongs to the intron maturase 2 family. MatK subfamily.

The protein resides in the plastid. The protein localises to the chloroplast. Usually encoded in the trnK tRNA gene intron. Probably assists in splicing its own and other chloroplast group II introns. The protein is Maturase K of Dianella ensifolia (Flax lily).